A 62-amino-acid chain; its full sequence is UPF0370 protein ESA_00777 (62 aa).

A helical transmembrane segment spans residues 4–24 (LGKYWWVLVLVFLLGVLLNVI). Residues 36-51 (MDNRPELPPHRDFNDK) show a composition bias toward basic and acidic residues. The interval 36–62 (MDNRPELPPHRDFNDKWDDEDDWPKKK) is disordered. The segment covering 52-62 (WDDEDDWPKKK) has biased composition (acidic residues).

The protein belongs to the UPF0370 family.

It is found in the cell membrane. The polypeptide is UPF0370 protein ESA_00777 (Cronobacter sakazakii (strain ATCC BAA-894) (Enterobacter sakazakii)).